The primary structure comprises 214 residues: Adenylate kinase (214 aa).

Gly-10–Thr-15 contacts ATP. The interval Ser-30–Val-59 is NMP. AMP-binding positions include Thr-31, Arg-36, Gln-57–Val-59, Gly-85–Arg-88, and Gln-92. The interval Gly-122 to Asp-159 is LID. Residues Arg-123 and Thr-132–Tyr-133 each bind ATP. Residues Arg-156 and Arg-167 each contribute to the AMP site. Gln-200 lines the ATP pocket.

It belongs to the adenylate kinase family. In terms of assembly, monomer.

Its subcellular location is the cytoplasm. The catalysed reaction is AMP + ATP = 2 ADP. It participates in purine metabolism; AMP biosynthesis via salvage pathway; AMP from ADP: step 1/1. Catalyzes the reversible transfer of the terminal phosphate group between ATP and AMP. Plays an important role in cellular energy homeostasis and in adenine nucleotide metabolism. The sequence is that of Adenylate kinase from Histophilus somni (strain 129Pt) (Haemophilus somnus).